Here is a 499-residue protein sequence, read N- to C-terminus: Glutelin type-A 2 (499 aa).

Positions 1 to 24 (MASINRPIVFFTVCLFLLCDGSLA) are cleaved as a signal peptide. Disulfide bonds link Cys-46–Cys-79 and Cys-122–Cys-313. In terms of domain architecture, Cupin type-1 1 spans 51-248 (LQAFEPIRSV…AFGISNQVAR (198 aa)). The tract at residues 280-300 (EQGQMQSREHYQEGGYQQSQY) is disordered. Residues 319–468 (QNIDNPNRAD…AYRISREEAQ (150 aa)) form the Cupin type-1 2 domain.

The protein belongs to the 11S seed storage protein (globulins) family. Hexamer; each subunit is composed of an acidic and a basic chain derived from a single precursor and linked by a disulfide bond.

Functionally, seed storage protein. This is Glutelin type-A 2 (GLUA2) from Oryza sativa subsp. japonica (Rice).